We begin with the raw amino-acid sequence, 274 residues long: Large ribosomal subunit protein uL2c (274 aa).

Disordered regions lie at residues 1 to 22 and 225 to 254; these read MAIHLYKTSTPSTRNGAVDSQV and PVDHPHGGGEGRAPIGRKKPVTPWGYPALG.

This sequence belongs to the universal ribosomal protein uL2 family. In terms of assembly, part of the 50S ribosomal subunit.

Its subcellular location is the plastid. The protein resides in the chloroplast. In Sinapis alba (White mustard), this protein is Large ribosomal subunit protein uL2c (rpl2).